The sequence spans 372 residues: Queuine tRNA-ribosyltransferase (372 aa).

D92 (proton acceptor) is an active-site residue. Residues 92–96, D146, Q188, and G215 each bind substrate; that span reads DSGGF. The tract at residues 246-252 is RNA binding; that stretch reads GIGTLRE. D265 (nucleophile) is an active-site residue. Positions 270 to 274 are RNA binding; important for wobble base 34 recognition; sequence TRLGR. Zn(2+)-binding residues include C303, C305, C308, and H334.

Belongs to the queuine tRNA-ribosyltransferase family. In terms of assembly, homodimer. Within each dimer, one monomer is responsible for RNA recognition and catalysis, while the other monomer binds to the replacement base PreQ1. Zn(2+) is required as a cofactor.

The catalysed reaction is 7-aminomethyl-7-carbaguanine + guanosine(34) in tRNA = 7-aminomethyl-7-carbaguanosine(34) in tRNA + guanine. Its pathway is tRNA modification; tRNA-queuosine biosynthesis. Catalyzes the base-exchange of a guanine (G) residue with the queuine precursor 7-aminomethyl-7-deazaguanine (PreQ1) at position 34 (anticodon wobble position) in tRNAs with GU(N) anticodons (tRNA-Asp, -Asn, -His and -Tyr). Catalysis occurs through a double-displacement mechanism. The nucleophile active site attacks the C1' of nucleotide 34 to detach the guanine base from the RNA, forming a covalent enzyme-RNA intermediate. The proton acceptor active site deprotonates the incoming PreQ1, allowing a nucleophilic attack on the C1' of the ribose to form the product. After dissociation, two additional enzymatic reactions on the tRNA convert PreQ1 to queuine (Q), resulting in the hypermodified nucleoside queuosine (7-(((4,5-cis-dihydroxy-2-cyclopenten-1-yl)amino)methyl)-7-deazaguanosine). The chain is Queuine tRNA-ribosyltransferase from Synechococcus sp. (strain CC9902).